The chain runs to 171 residues: Protein X (171 aa).

The next 3 helical transmembrane spans lie at 11 to 31 (SWYQ…IYSL), 38 to 58 (LAGI…VYLM), and 73 to 93 (AVIA…WLVI).

The protein localises to the virion membrane. The chain is Protein X (VPX) from Mus musculus domesticus (western European house mouse).